Consider the following 1615-residue polypeptide: Mediator of RNA polymerase II transcription subunit 23 (1615 aa).

2 disordered regions span residues 40–67 and 1230–1270; these read RQKP…DLPP and SSSS…NASE. Residues 41-51 are compositionally biased toward basic and acidic residues; it reads QKPDESLRDPP. Residues 1230 to 1241 are compositionally biased toward low complexity; it reads SSSSNCSSRSGS.

This sequence belongs to the Mediator complex subunit 23 family. In terms of assembly, component of the Mediator complex.

The protein resides in the nucleus. Its function is as follows. Component of the Mediator complex, a coactivator involved in the regulated transcription of nearly all RNA polymerase II-dependent genes. Mediator functions as a bridge to convey information from gene-specific regulatory proteins to the basal RNA polymerase II transcription machinery. The Mediator complex, having a compact conformation in its free form, is recruited to promoters by direct interactions with regulatory proteins and serves for the assembly of a functional preinitiation complex with RNA polymerase II and the general transcription factors. This Arabidopsis thaliana (Mouse-ear cress) protein is Mediator of RNA polymerase II transcription subunit 23 (MED23).